A 132-amino-acid chain; its full sequence is Large ribosomal subunit protein uL22 (132 aa).

It belongs to the universal ribosomal protein uL22 family. As to quaternary structure, part of the 50S ribosomal subunit.

Functionally, this protein binds specifically to 23S rRNA; its binding is stimulated by other ribosomal proteins, e.g. L4, L17, and L20. It is important during the early stages of 50S assembly. It makes multiple contacts with different domains of the 23S rRNA in the assembled 50S subunit and ribosome. In terms of biological role, the globular domain of the protein is located near the polypeptide exit tunnel on the outside of the subunit, while an extended beta-hairpin is found that lines the wall of the exit tunnel in the center of the 70S ribosome. The sequence is that of Large ribosomal subunit protein uL22 from Rhodospirillum centenum (strain ATCC 51521 / SW).